The following is a 526-amino-acid chain: Lysine--tRNA ligase (526 aa).

A 'HIGH' region motif is present at residues Pro-30–Asn-38. Residues Asp-95, Cys-99, His-100, His-106, Cys-177, and Cys-199 each contribute to the Zn(2+) site. The 'KMSKS' region motif lies at Lys-280–Ser-284.

Belongs to the class-I aminoacyl-tRNA synthetase family. Zn(2+) is required as a cofactor.

It is found in the cytoplasm. It carries out the reaction tRNA(Lys) + L-lysine + ATP = L-lysyl-tRNA(Lys) + AMP + diphosphate. The polypeptide is Lysine--tRNA ligase (lysS) (Thermococcus kodakarensis (strain ATCC BAA-918 / JCM 12380 / KOD1) (Pyrococcus kodakaraensis (strain KOD1))).